The primary structure comprises 358 residues: Dynein axonemal assembly factor 10 (358 aa).

WD repeat units lie at residues 63–105 (EKKH…QPVF), 109–154 (AHAS…APVA), 162–205 (NNVR…VRWE), 207–249 (NVRN…PKKG), 258–298 (TAGA…QRKV), and 320–358 (ISTQ…LNKV).

In terms of assembly, interacts with PIH1D1; the interaction associates DNAAF10 with the R2TP complex. Interacts with several dynein axonemal assembly factors.

It localises to the dynein axonemal particle. Its function is as follows. Key assembly factor specifically required for the stability of axonemal dynein heavy chains in cytoplasm. This Chlamydomonas reinhardtii (Chlamydomonas smithii) protein is Dynein axonemal assembly factor 10 (dnaaf10).